A 241-amino-acid chain; its full sequence is Probable 2-phosphosulfolactate phosphatase (241 aa).

It belongs to the ComB family. Requires Mg(2+) as cofactor.

The enzyme catalyses (2R)-O-phospho-3-sulfolactate + H2O = (2R)-3-sulfolactate + phosphate. This is Probable 2-phosphosulfolactate phosphatase from Caldanaerobacter subterraneus subsp. tengcongensis (strain DSM 15242 / JCM 11007 / NBRC 100824 / MB4) (Thermoanaerobacter tengcongensis).